A 354-amino-acid polypeptide reads, in one-letter code: Methylthioribose-1-phosphate isomerase (354 aa).

Residues 58–60 (RGA), arginine 101, and glutamine 204 contribute to the substrate site. The Proton donor role is filled by aspartate 245. 255–256 (NK) lines the substrate pocket.

Belongs to the eIF-2B alpha/beta/delta subunits family. MtnA subfamily.

The catalysed reaction is 5-(methylsulfanyl)-alpha-D-ribose 1-phosphate = 5-(methylsulfanyl)-D-ribulose 1-phosphate. It participates in amino-acid biosynthesis; L-methionine biosynthesis via salvage pathway; L-methionine from S-methyl-5-thio-alpha-D-ribose 1-phosphate: step 1/6. Catalyzes the interconversion of methylthioribose-1-phosphate (MTR-1-P) into methylthioribulose-1-phosphate (MTRu-1-P). In Xylella fastidiosa (strain 9a5c), this protein is Methylthioribose-1-phosphate isomerase.